We begin with the raw amino-acid sequence, 303 residues long: NAD kinase (303 aa).

Catalysis depends on Asp-85, which acts as the Proton acceptor. NAD(+)-binding positions include 85–86 (DG), 159–160 (ND), Arg-187, Asp-189, 200–205 (TAYALS), Ala-224, and Gln-258.

It belongs to the NAD kinase family. The cofactor is a divalent metal cation.

Its subcellular location is the cytoplasm. It catalyses the reaction NAD(+) + ATP = ADP + NADP(+) + H(+). In terms of biological role, involved in the regulation of the intracellular balance of NAD and NADP, and is a key enzyme in the biosynthesis of NADP. Catalyzes specifically the phosphorylation on 2'-hydroxyl of the adenosine moiety of NAD to yield NADP. The polypeptide is NAD kinase (Variovorax paradoxus (strain S110)).